Consider the following 186-residue polypeptide: Ran guanine nucleotide release factor (186 aa).

Positions 27–70 (DLRPVPDHQEVFCHRVTDQSLIVELLELQAHVQGEEAARYHFED) are interaction with RAN.

Belongs to the MOG1 family. Monomer. Interacts with RAN, both RAN-GTP and RAN-GDP. Competes with RCC1 for a common binding site on RAN and thereby inhibits RCC1-mediated nucleotide exchange. Forms a complex with RAN-GTP and RANBP1. Interacts with the cytoplasmic loop 2 of SCN5A.

It localises to the nucleus. The protein localises to the cytoplasm. It is found in the perinuclear region. Its subcellular location is the cell membrane. Its function is as follows. May regulate the intracellular trafficking of RAN. Promotes guanine nucleotide release from RAN and inhibits binding of new GTP by preventing the binding of the RAN guanine nucleotide exchange factor RCC1. Regulates the levels of GTP-bound RAN in the nucleus, and thereby plays a role in the regulation of RAN-dependent mitotic spindle dynamics. Enhances the expression of SCN5A at the cell membrane in cardiomyocytes. The polypeptide is Ran guanine nucleotide release factor (RANGRF) (Bos taurus (Bovine)).